Here is a 113-residue protein sequence, read N- to C-terminus: AAPTATVTPSSGLSDGTVVKVAGAGLQAGTAYDVGQCAWVDTGVLACNPADFSSVTADANGSASTSLTVRRSFEGFLFDGTRWGTVDCTTAACQVGLSDAAGNGPEGVAISFN.

2 disulfide bridges follow: Cys-37/Cys-47 and Cys-88/Cys-93.

It belongs to the neocarzinostatin family.

Its function is as follows. NCS has antibiotic activity (for Gram-positive bacteria) and antitumor activity (for certain mouse tumors). NCS binds non-covalently to a chromophore which is the cytotoxic and mutagenic component of the antibiotic. The chromophore binds to DNA as a weak intercalator and causes single- and double-strand breaks. This chain is Neocarzinostatin (ncsA), found in Streptomyces malayensis.